We begin with the raw amino-acid sequence, 227 residues long: MGQKVNPVGMRIGITRDWTSNWYADKKDFADRLNEDLNVRQLLQKRLKGAAVSRIQIERPARNAKIIIHSARPGVIIGKKGGEIEALRDEIFKVMKVPVHITIEEVRKPELDAKLVAENIAQQLERRVMFRRAMKRAVQNTLRQGALGVKISVSGRLGGAEIARTEWYREGRVPLHTFRADIDYATASAKTTYGIIGVKVWIFKGEVHAPKPQAEEAAPQETEEEVK.

A KH type-2 domain is found at 39–107 (VRQLLQKRLK…PVHITIEEVR (69 aa)).

The protein belongs to the universal ribosomal protein uS3 family. As to quaternary structure, part of the 30S ribosomal subunit. Forms a tight complex with proteins S10 and S14.

Functionally, binds the lower part of the 30S subunit head. Binds mRNA in the 70S ribosome, positioning it for translation. This is Small ribosomal subunit protein uS3 (rpsC) from Coxiella burnetii (strain RSA 493 / Nine Mile phase I).